Reading from the N-terminus, the 529-residue chain is Lysophosphatidylcholine acyltransferase 2 (529 aa).

At 1–50 the chain is on the cytoplasmic side; the sequence is MPPPHRVFALPRQQSLLLPAVINPFVHDLSLSTADITKCFLLGIILVPLR. Residues 51–71 traverse the membrane as a helical; Signal-anchor for type II membrane protein segment; the sequence is AIFLLLVLLVMWPVSVIITFG. Residues 72–529 are Lumenal-facing; the sequence is QSLKGVVEPM…EDSASDKKDD (458 aa). The HXXXXD motif motif lies at 128 to 133; it reads HSSFFD. The EGTC motif signature appears at 202–205; sequence EGTC. N-linked (GlcNAc...) asparagine glycosylation occurs at Asn207. EF-hand domains lie at 373 to 408, 410 to 445, and 449 to 480; these read PISP…LCRP, NNEE…ALGV, and DVHS…HPEY. Positions 386, 388, 390, 392, 397, 423, 425, 427, 429, 434, 458, 460, 462, 464, and 469 each coordinate Ca(2+).

The protein belongs to the 1-acyl-sn-glycerol-3-phosphate acyltransferase family.

The protein localises to the endoplasmic reticulum membrane. It localises to the golgi apparatus membrane. The protein resides in the cell membrane. Its subcellular location is the lipid droplet. The catalysed reaction is a 1-acyl-sn-glycero-3-phosphocholine + an acyl-CoA = a 1,2-diacyl-sn-glycero-3-phosphocholine + CoA. It catalyses the reaction a 1-O-alkyl-sn-glycero-3-phosphocholine + acetyl-CoA = a 1-O-alkyl-2-acetyl-sn-glycero-3-phosphocholine + CoA. It carries out the reaction a 1-acyl-sn-glycero-3-phosphate + an acyl-CoA = a 1,2-diacyl-sn-glycero-3-phosphate + CoA. The enzyme catalyses a 1-O-(1Z-alkenyl)-sn-glycero-3-phosphocholine + an acyl-CoA = a 1-O-(1Z-alkenyl)-2-acyl-sn-glycero-3-phosphocholine + CoA. The catalysed reaction is 1-hexadecanoyl-sn-glycero-3-phosphate + (9Z)-octadecenoyl-CoA = 1-hexadecanoyl-2-(9Z-octadecenoyl)-sn-glycero-3-phosphate + CoA. It catalyses the reaction 1-(9Z-octadecenoyl)-sn-glycero-3-phosphate + (9Z)-octadecenoyl-CoA = 1,2-di-(9Z-octadecenoyl)-sn-glycero-3-phosphate + CoA. It carries out the reaction 1-(9Z-octadecenoyl)-sn-glycero-3-phosphate + hexadecanoyl-CoA = 1-(9Z)-octadecenoyl-2-hexadecanoyl-sn-glycero-3-phosphate + CoA. The enzyme catalyses 1-heptadecanoyl-sn-glycero-3-phosphate + (9Z)-octadecenoyl-CoA = 1-heptadecanoyl-2-(9Z)-octadecenoyl-sn-glycero-3-phosphate + CoA. The catalysed reaction is 1-octadecanoyl-sn-glycero-3-phosphate + (9Z)-octadecenoyl-CoA = 1-octadecanoyl-2-(9Z-octadecenoyl)-sn-glycero-3-phosphate + CoA. It catalyses the reaction heptadecanoyl-CoA + 1-(9Z-octadecenoyl)-sn-glycero-3-phosphate = 1-(9Z)-octadecenoyl-2-heptadecanoyl-sn-glycero-3-phosphate + CoA. It carries out the reaction 1-(9Z-octadecenoyl)-sn-glycero-3-phosphate + (9Z,12Z)-octadecadienoyl-CoA = 1-(9Z)-octadecenoyl-2-(9Z,12Z)-octadecadienoyl-sn-glycero-3-phosphate + CoA. The enzyme catalyses 1-(9Z-octadecenoyl)-sn-glycero-3-phosphate + tetradecanoyl-CoA = 1-(9Z)-octadecenoyl-2-tetradecanoyl-sn-glycero-3-phosphate + CoA. The catalysed reaction is pentadecanoyl-CoA + 1-(9Z-octadecenoyl)-sn-glycero-3-phosphate = 1-(9Z)-octadecenoyl-2-pentadecanoyl-sn-glycero-3-phosphate + CoA. It catalyses the reaction nonadecanoyl-CoA + 1-(9Z-octadecenoyl)-sn-glycero-3-phosphate = 1-(9Z)-octadecenoyl-2-nonadecanoyl-sn-glycero-3-phosphate + CoA. It carries out the reaction 1-hexadecanoyl-sn-glycero-3-phosphocholine + (9Z)-octadecenoyl-CoA = 1-hexadecanoyl-2-(9Z-octadecenoyl)-sn-glycero-3-phosphocholine + CoA. The enzyme catalyses 1-O-hexadecyl-sn-glycero-3-phosphocholine + acetyl-CoA = 1-O-hexadecyl-2-acetyl-sn-glycero-3-phosphocholine + CoA. The catalysed reaction is 1-O-octadecyl-sn-glycero-3-phosphocholine + acetyl-CoA = 1-O-octadecyl-2-acetyl-sn-glycero-3-phosphocholine + CoA. It catalyses the reaction 1-hexadecanoyl-sn-glycero-3-phosphocholine + acetyl-CoA = 1-hexadecanoyl-2-acetyl-sn-glycero-3-phosphocholine + CoA. It carries out the reaction 1-octadecanoyl-sn-glycero-3-phosphocholine + acetyl-CoA = 1-octadecanoyl-2-acetyl-sn-glycero-3-phosphocholine + CoA. The enzyme catalyses a 1-O-(1Z-alkenyl)-sn-glycero-3-phosphocholine + acetyl-CoA = 1-O-(1Z)-alkenyl-2-acetyl-sn-glycero-3-phosphocholine + CoA. The catalysed reaction is 1-O-octadecyl-sn-glycero-3-phosphocholine + (5Z,8Z,11Z,14Z)-eicosatetraenoyl-CoA = 1-O-octadecyl-2-(5Z,8Z,11Z,14Z)-eicosatetraenoyl-sn-glycero-3-phosphocholine + CoA. It functions in the pathway lipid metabolism; phospholipid metabolism. Exhibits both acyltransferase and acetyltransferase activities. Activity is calcium-dependent. Catalyzes the conversion of lysophosphatidylcholine (1-acyl-sn-glycero-3-phosphocholine or LPC) into phosphatidylcholine (1,2-diacyl-sn-glycero-3-phosphocholine or PC). Catalyzes the conversion 1-acyl-sn-glycerol-3-phosphate (lysophosphatidic acid or LPA) into 1,2-diacyl-sn-glycerol-3-phosphate (phosphatidic acid or PA) by incorporating an acyl moiety at the sn-2 position of the glycerol backbone. Involved in platelet-activating factor (PAF) biosynthesis by catalyzing the conversion of the PAF precursor, 1-O-alkyl-sn-glycero-3-phosphocholine (lyso-PAF) into 1-O-alkyl-2-acetyl-sn-glycero-3-phosphocholine (PAF). This chain is Lysophosphatidylcholine acyltransferase 2 (lpcat2), found in Danio rerio (Zebrafish).